The primary structure comprises 272 residues: Phosphoglycolate phosphatase 1 (272 aa).

Asp19 acts as the Nucleophile in catalysis. Mg(2+) contacts are provided by Asp19, Asp21, and Asp182.

The protein belongs to the HAD-like hydrolase superfamily. CbbY/CbbZ/Gph/YieH family. The cofactor is Mg(2+).

It catalyses the reaction 2-phosphoglycolate + H2O = glycolate + phosphate. It functions in the pathway organic acid metabolism; glycolate biosynthesis; glycolate from 2-phosphoglycolate: step 1/1. Its function is as follows. Specifically catalyzes the dephosphorylation of 2-phosphoglycolate. Is involved in the dissimilation of the intracellular 2-phosphoglycolate formed during the DNA repair of 3'-phosphoglycolate ends, a major class of DNA lesions induced by oxidative stress. The chain is Phosphoglycolate phosphatase 1 from Pseudomonas aeruginosa (strain ATCC 15692 / DSM 22644 / CIP 104116 / JCM 14847 / LMG 12228 / 1C / PRS 101 / PAO1).